The following is a 168-amino-acid chain: Gamma-glutamylaminecyclotransferase (168 aa).

Positions 1–20 (MPGPECKWSTTETGAPCGTD) are disordered. 32-35 (YGTL) contacts substrate. The active-site Proton acceptor is the Glu107.

The protein belongs to the gamma-glutamylcyclotransferase family. In terms of assembly, monomer.

It catalyses the reaction epsilon-(gamma-L-glutamyl)-L-lysine = 5-oxo-L-proline + L-lysine. Functionally, contributes to degradation of proteins cross-linked by transglutaminases by degrading the cross-link between a lysine and a glutamic acid residue. Catalyzes the formation of 5-oxo-L-proline from L-gamma-glutamyl-L-epsilon-lysine. Inactive with L-gamma-glutamyl-alpha-amino acid substrates such as L-gamma-glutamyl-L-alpha-cysteine and L-gamma-glutamyl-L-alpha-alanine. This Bos taurus (Bovine) protein is Gamma-glutamylaminecyclotransferase (GGACT).